Consider the following 211-residue polypeptide: MKFLSARDFHPVAFLGLMLVTTTAFPTSQVRRGDFTEDTTPNRPVYTTSQVGGLITHVLWEIVEMRKELCNGNSDCMNNDDALAENNLKLPEIQRNDGCYQTGYNQEICLLKISSGLLEYHSYLEYMKNNLKDNKKDKARVLQRDTETLIHIFNQEVKDLHKIVLPTPISNALLTDKLESQKEWLRTKTIQFILKSLEEFLKVTLRSTRQT.

The signal sequence occupies residues 1 to 24 (MKFLSARDFHPVAFLGLMLVTTTA). Disulfide bonds link cysteine 70/cysteine 76 and cysteine 99/cysteine 109.

The protein belongs to the IL-6 superfamily. Component of a hexamer of two molecules each of IL6, IL6R and IL6ST; first binds to IL6R to associate with the signaling subunit IL6ST. Interacts with IL6R (via the N-terminal ectodomain); this interaction may be affected by IL6R-binding with SORL1, hence decreasing IL6 cis signaling. Interacts with SORL1 (via the N-terminal ectodomain); this interaction leads to IL6 internalization and lysosomal degradation. May form a trimeric complex with the soluble SORL1 ectodomain and soluble IL6R receptor; this interaction might stabilize circulating IL6, hence promoting IL6 trans signaling. In terms of processing, N- and O-glycosylated. In terms of tissue distribution, expressed by dendritic cells and macrophages. Expressed by activated follicular B cells. Abundantly expressed in the central nervous system (CNS), particularly the hypothalamic region.

It is found in the secreted. Its function is as follows. Cytokine with a wide variety of biological functions in immunity, tissue regeneration, and metabolism. Binds to IL6R, then the complex associates to the signaling subunit IL6ST/gp130 to trigger the intracellular IL6-signaling pathway. The interaction with the membrane-bound IL6R and IL6ST stimulates 'classic signaling', whereas the binding of IL6 and soluble IL6R to IL6ST stimulates 'trans-signaling'. Alternatively, 'cluster signaling' occurs when membrane-bound IL6:IL6R complexes on transmitter cells activate IL6ST receptors on neighboring receiver cells. Functionally, IL6 is a potent inducer of the acute phase response. Rapid production of IL6 contributes to host defense during infection and tissue injury, but excessive IL6 synthesis is involved in disease pathology. In the innate immune response, is synthesized by myeloid cells, such as macrophages and dendritic cells, upon recognition of pathogens through toll-like receptors (TLRs) at the site of infection or tissue injury. In the adaptive immune response, is required for the differentiation of B-cells into immunoglolin-secreting cells. Plays a major role in the differentiation of CD4(+) T cell subsets. Essential factor for the development of T follicular helper (Tfh) cells that are required for the induction of germinal-center formation. Together with IL21, controls the early generation of Tfh cells and are critical for an effective antibody response to acute viral infection. Required to drive naive CD4(+) T cells to the Th17 lineage, through 'cluster signaling' by dendritic cells. Also required for proliferation of myeloma cells and the survival of plasmablast cells. Acts as an essential factor in bone homeostasis and on vessels directly or indirectly by induction of VEGF, resulting in increased angiogenesis activity and vascular permeability. Induces, through 'trans-signaling' and synergistically with IL1B and TNF, the production of VEGF. Involved in metabolic controls, is discharged into the bloodstream after muscle contraction increasing lipolysis and improving insulin resistance. 'Trans-signaling' in central nervous system regulates energy and glucose homeostasis. Mediates, through GLP-1, crosstalk between insulin-sensitive tissues, intestinal L cells and pancreatic islets to adapt to changes in insulin demand. Also acts as a myokine. Plays a protective role during liver injury, being required for maintenance of tissue regeneration. Also has a pivotal role in iron metabolism by regulating HAMP/hepcidin expression upon inflammation or bacterial infection. Through activation of IL6ST-YAP-NOTCH pathway, induces inflammation-induced epithelial regeneration. The protein is Interleukin-6 of Mus musculus (Mouse).